The sequence spans 197 residues: Holliday junction branch migration complex subunit RuvA (197 aa).

The domain I stretch occupies residues 1–62; the sequence is MIEFVRGEVA…EDQEVLFGFR (62 aa). A domain II region spans residues 63–141; that stretch reads SRRERALFTK…ELAPDYIPSE (79 aa). Residues 141–145 form a flexible linker region; that stretch reads EGLFA. The tract at residues 146–197 is domain III; sequence QGNAELNEACEALTALGYSEREVEKVKKALQGEVLSTDQYVKRALQLLLNVR.

This sequence belongs to the RuvA family. As to quaternary structure, homotetramer. Forms an RuvA(8)-RuvB(12)-Holliday junction (HJ) complex. HJ DNA is sandwiched between 2 RuvA tetramers; dsDNA enters through RuvA and exits via RuvB. An RuvB hexamer assembles on each DNA strand where it exits the tetramer. Each RuvB hexamer is contacted by two RuvA subunits (via domain III) on 2 adjacent RuvB subunits; this complex drives branch migration. In the full resolvosome a probable DNA-RuvA(4)-RuvB(12)-RuvC(2) complex forms which resolves the HJ.

Its subcellular location is the cytoplasm. Its function is as follows. The RuvA-RuvB-RuvC complex processes Holliday junction (HJ) DNA during genetic recombination and DNA repair, while the RuvA-RuvB complex plays an important role in the rescue of blocked DNA replication forks via replication fork reversal (RFR). RuvA specifically binds to HJ cruciform DNA, conferring on it an open structure. The RuvB hexamer acts as an ATP-dependent pump, pulling dsDNA into and through the RuvAB complex. HJ branch migration allows RuvC to scan DNA until it finds its consensus sequence, where it cleaves and resolves the cruciform DNA. This Exiguobacterium sibiricum (strain DSM 17290 / CCUG 55495 / CIP 109462 / JCM 13490 / 255-15) protein is Holliday junction branch migration complex subunit RuvA.